The primary structure comprises 473 residues: Cell division protein FtsP (473 aa).

Positions 1–27 form a signal peptide, tat-type signal; sequence MSFSRRQFLQASGLAVCLGSLSSSVRA.

It belongs to the FtsP family. Post-translationally, predicted to be exported by the Tat system. The position of the signal peptide cleavage has not been experimentally proven.

The protein resides in the periplasm. Cell division protein that is required for growth during stress conditions. May be involved in protecting or stabilizing the divisomal assembly under conditions of stress. This Proteus mirabilis (strain HI4320) protein is Cell division protein FtsP.